The sequence spans 698 residues: Protein artemis (698 aa).

T380 is subject to Phosphothreonine. The residue at position 385 (S385) is a Phosphoserine. Disordered stretches follow at residues 445–485 (ANFV…DPDV), 505–595 (LENL…DSIS), and 620–669 (NGVP…LPKP). Over residues 449 to 461 (DCDESNSDSEGEL) the composition is skewed to acidic residues. The span at 508–521 (LPSSIETGGSQSPK) shows a compositional bias: polar residues. Residues 538–551 (THISSQNSSQSTHI) are compositionally biased toward low complexity. The span at 552–583 (TDQGSQGWDSQCDTVLLSSQEKSGGDSTSLNK) shows a compositional bias: polar residues. The span at 641-655 (TSLTSTQADSQSSSD) shows a compositional bias: low complexity. S650 carries the phosphoserine; by ATM modification.

Belongs to the DNA repair metallo-beta-lactamase (DRMBL) family. Interacts with LIG4; the interaction is direct. Interacts with ATM. Interacts with BRCA1. Interacts with PRKDC. Interacts with TP53BP1. Also exhibits ATM- and phosphorylation-dependent interaction with the MRN complex, composed of MRE11, RAD50, and NBN. Post-translationally, phosphorylation on undefined residues by PRKDC may stimulate endonucleolytic activity on 5' and 3' hairpins and overhangs. PRKDC must remain present, even after phosphorylation, for efficient hairpin opening. Also phosphorylated by ATM in response to ionizing radiation (IR) and by ATR in response to ultraviolet (UV) radiation.

The protein resides in the nucleus. Functionally, required for V(D)J recombination, the process by which exons encoding the antigen-binding domains of immunoglobulins and T-cell receptor proteins are assembled from individual V, (D), and J gene segments. V(D)J recombination is initiated by the lymphoid specific RAG endonuclease complex, which generates site specific DNA double strand breaks (DSBs). These DSBs present two types of DNA end structures: hairpin sealed coding ends and phosphorylated blunt signal ends. These ends are independently repaired by the non homologous end joining (NHEJ) pathway to form coding and signal joints respectively. This protein exhibits single-strand specific 5'-3' exonuclease activity in isolation, and acquires endonucleolytic activity on 5' and 3' hairpins and overhangs when in a complex with PRKDC. The latter activity is required specifically for the resolution of closed hairpins prior to the formation of the coding joint. May also be required for the repair of complex DSBs induced by ionizing radiation, which require substantial end-processing prior to religation by NHEJ. This is Protein artemis (Dclre1c) from Rattus norvegicus (Rat).